A 78-amino-acid chain; its full sequence is Exodeoxyribonuclease 7 small subunit (78 aa).

Belongs to the XseB family. Heterooligomer composed of large and small subunits.

It is found in the cytoplasm. It carries out the reaction Exonucleolytic cleavage in either 5'- to 3'- or 3'- to 5'-direction to yield nucleoside 5'-phosphates.. Its function is as follows. Bidirectionally degrades single-stranded DNA into large acid-insoluble oligonucleotides, which are then degraded further into small acid-soluble oligonucleotides. The polypeptide is Exodeoxyribonuclease 7 small subunit (Actinobacillus succinogenes (strain ATCC 55618 / DSM 22257 / CCUG 43843 / 130Z)).